Here is a 146-residue protein sequence, read N- to C-terminus: MKSENVNKRDEYQRVFSCFDKSHQGKVSVSTIERCVDAIKSGKRAVVDQEDTTNPNPEESTDDKSLELEDFVKLVEEGEEADKEKDLKEAFKLYEESEGITPKSLKRMLSLLGESKSLKDCEVMISQFDINRDGIINFDEFRAMMQ.

Residues 7 to 42 (NKRDEYQRVFSCFDKSHQGKVSVSTIERCVDAIKSG) form the EF-hand 1 domain. A disordered region spans residues 44–65 (RAVVDQEDTTNPNPEESTDDKS). An EF-hand 2 domain is found at 116–146 (KSLKDCEVMISQFDINRDGIINFDEFRAMMQ). Ca(2+) is bound by residues Asp129, Asn131, Asp133, and Glu140.

In terms of biological role, potential calcium sensor. This chain is Probable calcium-binding protein CML40 (CML40), found in Arabidopsis thaliana (Mouse-ear cress).